Consider the following 1187-residue polypeptide: DNA-directed RNA polymerase subunit beta (1187 aa).

Residues 1150–1187 (KDEDDDPASSADDLGFNIGARPDAAAKEDQKAEEPEYQ) are disordered. Basic and acidic residues predominate over residues 1173 to 1187 (AAAKEDQKAEEPEYQ).

It belongs to the RNA polymerase beta chain family. In terms of assembly, the RNAP catalytic core consists of 2 alpha, 1 beta, 1 beta' and 1 omega subunit. When a sigma factor is associated with the core the holoenzyme is formed, which can initiate transcription.

It catalyses the reaction RNA(n) + a ribonucleoside 5'-triphosphate = RNA(n+1) + diphosphate. In terms of biological role, DNA-dependent RNA polymerase catalyzes the transcription of DNA into RNA using the four ribonucleoside triphosphates as substrates. This chain is DNA-directed RNA polymerase subunit beta, found in Bifidobacterium longum subsp. infantis (strain ATCC 15697 / DSM 20088 / JCM 1222 / NCTC 11817 / S12).